A 244-amino-acid polypeptide reads, in one-letter code: Phosphoadenosine 5'-phosphosulfate reductase (244 aa).

The active-site Nucleophile; cysteine thiosulfonate intermediate is the Cys239.

This sequence belongs to the PAPS reductase family. CysH subfamily.

It is found in the cytoplasm. The enzyme catalyses [thioredoxin]-disulfide + sulfite + adenosine 3',5'-bisphosphate + 2 H(+) = [thioredoxin]-dithiol + 3'-phosphoadenylyl sulfate. Its pathway is sulfur metabolism; hydrogen sulfide biosynthesis; sulfite from sulfate: step 3/3. In terms of biological role, catalyzes the formation of sulfite from phosphoadenosine 5'-phosphosulfate (PAPS) using thioredoxin as an electron donor. The polypeptide is Phosphoadenosine 5'-phosphosulfate reductase (Serratia proteamaculans (strain 568)).